The primary structure comprises 832 residues: MSYQMPQNRTMSHNPYNSSDMPMPSAKEQTLMWQQNSYLGDSGIHSGAVTQVPSLSGKDDDMEDDPLMFDMDQGFSQNFTQDQVDDMNQQLSQTRSQRVRAAMFPETLEEGIEIPSTQFDPQQPTAVQRLSEPSQMLKHAVVNLINYQDDADLATRAIPELIKLLNDEDQVVVSQAAMMVHQLSKKEASRHAIMNSPQMVAALVRALSQSNDLETTKGAVGTLHNLSHHRQGLLAIFKSGGIPALVKLLSSPVESVLFYAITTLHNLLLHQDGSKMAVRLAGGLQKMVALLQRNNVKFLAIVTDCLQILAYGNQESKLIILASTGPSELVRIMRSYDYEKLLWTTSRVLKVLSVCSSNKPAIVEAGGMQALAMHLGNPSQRLVQNCLWTLRNLSDAATKVDGLETLLSGLVTVLGSSDVNVVTCAAGILSNLTCNNQRNKVTVCQVGGVEALVGTIINAGDREEITEPAVCALRHLTSRHPESESAQNIVRNGYGLPVIVKLLNPPSRWPLIKAVIGLIRNLALCPSNAAPLREHGAIHLLVRLLFKAFQDTQRQRSSVATNGSQPPGAYADGVRMEEIVEGTVGALHILSKEELNRQLIRQQNVISIFVQLLFYNDIENIQRVAAGVLCELAVDKEVAEMIEAEGATAPLTELLNSANEGVATYAAAVLFKMSEDKSMDYKKRFSSELTTLPVFRDDTMWNNGELGIGPDLQDILSPDQAYEGLYGQGPPSVHSSHGGRAFQQGYDTLPIDSMQGLEIGGGGNAGPAGSNPNAGNNPGAGGPPSGQPTSPYAMDMDVGEMDASELTFDHLDVMPSPPQDNNQVAAWYDTDL.

A compositionally biased stretch (polar residues) spans 1–20 (MSYQMPQNRTMSHNPYNSSD). Residues 1–24 (MSYQMPQNRTMSHNPYNSSDMPMP) form a disordered region. ARM repeat units follow at residues 146–185 (NYQDDADLATRAIPELIKLLNDEDQVVVSQAAMMVHQLSK), 188–228 (ASRH…NLSH), 230–269 (RQGLLAIFKSGGIPALVKLLSSPVESVLFYAITTLHNLLL), 272–311 (DGSKMAVRLAGGLQKMVALLQRNNVKFLAIVTDCLQILAY), 356–395 (SSNKPAIVEAGGMQALAMHLGNPSQRLVQNCLWTLRNLSD), 397–434 (ATKVDGLETLLSGLVTVLGSSDVNVVTCAAGILSNLTC), 483–524 (SESA…NLAL), 594–634 (ELNR…ELAV), and 636–675 (KEVAEMIEAEGATAPLTELLNSANEGVATYAAAVLFKMSE). The tract at residues 721–832 (AYEGLYGQGP…QVAAWYDTDL (112 aa)) is disordered. Over residues 767 to 777 (PAGSNPNAGNN) the composition is skewed to low complexity.

Belongs to the beta-catenin family.

It localises to the cytoplasm. It is found in the cell membrane. The protein resides in the cell junction. The protein localises to the adherens junction. Functionally, may associate with CadN and participate in the transmission of developmental information. Can associate with alpha-catenin. Accumulates through wg signaling; arm function in wg signal transduction is required early in development for determination of neuroblast fate. Arm and Abl proteins function cooperatively at adherens junctions in both the CNS and epidermis. This is Armadillo segment polarity protein from Aedes aegypti (Yellowfever mosquito).